The chain runs to 307 residues: MLISSRIVRSSLVNVPLRLSRCFTQAHRACKEEEVNSPLSSAAEQPEQKYTHFGSKTVLKSTKQKLVGDVFSSVANRYDLMNDVMSLGIHRLWKDHFINKLDAGKRPNSTTPLNFIDVAGGSGDIAFGLLDHAESKFGDTESTMDIVDINPDMLKEGEKRAMEQGKYFKDPRVRFLVSNGEKLEEIDSDSKDIYTVSFGIRNFTDIQKGLNTAYRVLKPGGIFYCLEFSKIENPLMDFAYQQWAKVLPVMGSMIANDYDSYQYLVESIERFPDQETFKSMIEKAGFKSAGYESLTFGICAIHWGIKV.

Residues 1-19 (MLISSRIVRSSLVNVPLRL) constitute a mitochondrion transit peptide. Residues Ser-122, Asp-148, 179-180 (NG), and Ser-197 contribute to the S-adenosyl-L-methionine site.

Belongs to the class I-like SAM-binding methyltransferase superfamily. MenG/UbiE family. In terms of assembly, component of a multi-subunit COQ enzyme complex, composed of at least COQ3, COQ4, COQ5, COQ6, COQ7 and COQ9. Interacts with COQ3.

It is found in the mitochondrion inner membrane. The enzyme catalyses 2-methoxy-6-(all-trans-hexaprenyl)benzene-1,4-diol + S-adenosyl-L-methionine = 5-methoxy-2-methyl-3-(all-trans-hexaprenyl)benzene-1,4-diol + S-adenosyl-L-homocysteine + H(+). It functions in the pathway cofactor biosynthesis; ubiquinone biosynthesis. Its function is as follows. Methyltransferase required for the conversion of 2-hexaprenyl-6-methoxy-1,4-benzoquinol (DDMQH2) to 2-hexaprenyl-3-methyl-6-methoxy-1,4-benzoquinol (DMQH2). The chain is 2-methoxy-6-polyprenyl-1,4-benzoquinol methylase, mitochondrial from Saccharomyces cerevisiae (strain ATCC 204508 / S288c) (Baker's yeast).